A 123-amino-acid polypeptide reads, in one-letter code: Hydrogenase maturation factor HypA (123 aa).

Residue His-2 coordinates Ni(2+). Cys-73, Cys-76, Cys-90, and Cys-93 together coordinate Zn(2+).

This sequence belongs to the HypA/HybF family.

Involved in the maturation of [NiFe] hydrogenases. Required for nickel insertion into the metal center of the hydrogenase. The sequence is that of Hydrogenase maturation factor HypA from Roseiflexus sp. (strain RS-1).